Consider the following 192-residue polypeptide: dTTP/UTP pyrophosphatase (192 aa).

Asp-72 serves as the catalytic Proton acceptor.

Belongs to the Maf family. YhdE subfamily. Requires a divalent metal cation as cofactor.

The protein localises to the cytoplasm. It carries out the reaction dTTP + H2O = dTMP + diphosphate + H(+). The catalysed reaction is UTP + H2O = UMP + diphosphate + H(+). Its function is as follows. Nucleoside triphosphate pyrophosphatase that hydrolyzes dTTP and UTP. May have a dual role in cell division arrest and in preventing the incorporation of modified nucleotides into cellular nucleic acids. This is dTTP/UTP pyrophosphatase from Geobacter metallireducens (strain ATCC 53774 / DSM 7210 / GS-15).